The sequence spans 572 residues: Laccase-3 (572 aa).

Residues 1-18 form the signal peptide; sequence MARTTFLVSVSLFVSAVL. Plastocyanin-like domains are found at residues 21-145 and 157-304; these read TVEY…LVIY and IDDE…LIYE. Positions 82, 84, 127, and 129 each coordinate Cu cation. An intrachain disulfide couples Cys-103 to Cys-561. N-linked (GlcNAc...) asparagine glycans are attached at residues Asn-182, Asn-228, Asn-294, Asn-367, and Asn-405. The Plastocyanin-like 3 domain maps to 422 to 540; that stretch reads DMPTLLKILT…EGFAMVFAEA (119 aa). Cu cation contacts are provided by His-470, His-473, His-475, His-522, Cys-523, His-524, and His-528.

This sequence belongs to the multicopper oxidase family. As to quaternary structure, homodimer. The cofactor is Cu cation. In terms of tissue distribution, in mycelia, at a lower level than LCC4.

It localises to the secreted. It carries out the reaction 4 hydroquinone + O2 = 4 benzosemiquinone + 2 H2O. Functionally, lignin degradation and detoxification of lignin-derived products. The sequence is that of Laccase-3 (LCC3) from Thanatephorus cucumeris (Black scurf of potato).